The sequence spans 277 residues: Large ribosomal subunit protein mL46 (277 aa).

Lys217 carries the N6-succinyllysine modification. The residue at position 228 (Lys228) is an N6-acetyllysine. Position 246 is an N6-succinyllysine (Lys246).

Belongs to the mitochondrion-specific ribosomal protein mL46 family. Component of the mitochondrial ribosome large subunit (39S) which comprises a 16S rRNA and about 50 distinct proteins.

The protein resides in the mitochondrion. This is Large ribosomal subunit protein mL46 (Mrpl46) from Rattus norvegicus (Rat).